We begin with the raw amino-acid sequence, 280 residues long: 4-diphosphocytidyl-2-C-methyl-D-erythritol kinase (280 aa).

Lysine 11 is an active-site residue. 95 to 105 (PVGAGLGGGSS) lines the ATP pocket. Aspartate 137 is a catalytic residue.

The protein belongs to the GHMP kinase family. IspE subfamily.

It carries out the reaction 4-CDP-2-C-methyl-D-erythritol + ATP = 4-CDP-2-C-methyl-D-erythritol 2-phosphate + ADP + H(+). Its pathway is isoprenoid biosynthesis; isopentenyl diphosphate biosynthesis via DXP pathway; isopentenyl diphosphate from 1-deoxy-D-xylulose 5-phosphate: step 3/6. In terms of biological role, catalyzes the phosphorylation of the position 2 hydroxy group of 4-diphosphocytidyl-2C-methyl-D-erythritol. The protein is 4-diphosphocytidyl-2-C-methyl-D-erythritol kinase of Geobacter sp. (strain M21).